The chain runs to 274 residues: Dermonecrotic toxin SdSicTox-betaIIB1bi (274 aa).

Residue His5 is part of the active site. The Mg(2+) site is built by Glu25 and Asp27. His41 acts as the Nucleophile in catalysis. Intrachain disulfides connect Cys45-Cys51 and Cys47-Cys190. Asp85 serves as a coordination point for Mg(2+).

It belongs to the arthropod phospholipase D family. Class II subfamily. Requires Mg(2+) as cofactor. Expressed by the venom gland.

The protein resides in the secreted. The enzyme catalyses an N-(acyl)-sphingosylphosphocholine = an N-(acyl)-sphingosyl-1,3-cyclic phosphate + choline. The catalysed reaction is an N-(acyl)-sphingosylphosphoethanolamine = an N-(acyl)-sphingosyl-1,3-cyclic phosphate + ethanolamine. It catalyses the reaction a 1-acyl-sn-glycero-3-phosphocholine = a 1-acyl-sn-glycero-2,3-cyclic phosphate + choline. It carries out the reaction a 1-acyl-sn-glycero-3-phosphoethanolamine = a 1-acyl-sn-glycero-2,3-cyclic phosphate + ethanolamine. Functionally, dermonecrotic toxins cleave the phosphodiester linkage between the phosphate and headgroup of certain phospholipids (sphingolipid and lysolipid substrates), forming an alcohol (often choline) and a cyclic phosphate. This toxin acts on sphingomyelin (SM). It may also act on ceramide phosphoethanolamine (CPE), lysophosphatidylcholine (LPC) and lysophosphatidylethanolamine (LPE), but not on lysophosphatidylserine (LPS), and lysophosphatidylglycerol (LPG). It acts by transphosphatidylation, releasing exclusively cyclic phosphate products as second products. Induces dermonecrosis, hemolysis, increased vascular permeability, edema, inflammatory response, and platelet aggregation. The sequence is that of Dermonecrotic toxin SdSicTox-betaIIB1bi from Sicarius cf. damarensis (strain GJB-2008) (Six-eyed sand spider).